A 217-amino-acid polypeptide reads, in one-letter code: CASP-like protein UU4 (217 aa).

Basic and acidic residues predominate over residues 1–11 (MYTGQSDHRPE). The segment at 1–21 (MYTGQSDHRPEGVGVNPGSPN) is disordered. The Cytoplasmic portion of the chain corresponds to 1 to 61 (MYTGQSDHRP…VKKNINHMSG (61 aa)). Residues 62-82 (LSLGLRVSEFVLSVIAFSLMA) form a helical membrane-spanning segment. Residues 83–98 (SAEQNGAVYSTFTSYS) lie on the Extracellular side of the membrane. The helical transmembrane segment at 99 to 119 (FVLAINVLVALYAIGQIILSV) threads the bilayer. Topologically, residues 120-141 (MPLVSGSAPKKLYLFITFGCDQ) are cytoplasmic. Residues 142–162 (LSAFLLMAAGAAGASVAMLIN) traverse the membrane as a helical segment. Topologically, residues 163–187 (RKGVIDDYGSGCIDGKITVFCAHAE) are extracellular. A helical membrane pass occupies residues 188-208 (ASIAFTFLSFFCVMISSYLGV). Over 209–217 (YNLAPYLIL) the chain is Cytoplasmic.

Belongs to the Casparian strip membrane proteins (CASP) family. As to quaternary structure, homodimer and heterodimers.

It is found in the cell membrane. This Physcomitrium patens (Spreading-leaved earth moss) protein is CASP-like protein UU4.